Consider the following 360-residue polypeptide: Pyrimidine monooxygenase RutA (360 aa).

FMN is bound by residues I49–K50, N115, E124, R140–Y141, and S190.

This sequence belongs to the NtaA/SnaA/DszA monooxygenase family. RutA subfamily.

The catalysed reaction is uracil + FMNH2 + NADH + O2 = (Z)-3-ureidoacrylate + FMN + NAD(+) + H2O + H(+). It catalyses the reaction thymine + FMNH2 + NADH + O2 = (Z)-2-methylureidoacrylate + FMN + NAD(+) + H2O + H(+). Its function is as follows. Catalyzes the pyrimidine ring opening between N-3 and C-4 by an unusual flavin hydroperoxide-catalyzed mechanism, adding oxygen atoms in the process to yield ureidoacrylate peracid, that immediately reacts with FMN forming ureidoacrylate and FMN-N(5)-oxide. The FMN-N(5)-oxide reacts spontaneously with NADH to produce FMN. Requires the flavin reductase RutF to regenerate FMN in vivo. This Bradyrhizobium sp. (strain BTAi1 / ATCC BAA-1182) protein is Pyrimidine monooxygenase RutA.